Consider the following 97-residue polypeptide: Co-chaperonin GroES (97 aa).

Belongs to the GroES chaperonin family. In terms of assembly, heptamer of 7 subunits arranged in a ring. Interacts with the chaperonin GroEL.

It is found in the cytoplasm. Functionally, together with the chaperonin GroEL, plays an essential role in assisting protein folding. The GroEL-GroES system forms a nano-cage that allows encapsulation of the non-native substrate proteins and provides a physical environment optimized to promote and accelerate protein folding. GroES binds to the apical surface of the GroEL ring, thereby capping the opening of the GroEL channel. This is Co-chaperonin GroES from Buchnera aphidicola subsp. Tetraneura caerulescens.